Consider the following 400-residue polypeptide: Phosphoribosylamine--glycine ligase (400 aa).

Residues 99–303 (KRFMKKYGIR…FVNAVLEGYR (205 aa)) enclose the ATP-grasp domain. ATP is bound at residue 125 to 186 (IKKFSPPYVI…DEFLAGNELS (62 aa)). Glutamate 273 and asparagine 275 together coordinate Mg(2+).

It belongs to the GARS family. Mg(2+) is required as a cofactor. It depends on Mn(2+) as a cofactor.

The enzyme catalyses 5-phospho-beta-D-ribosylamine + glycine + ATP = N(1)-(5-phospho-beta-D-ribosyl)glycinamide + ADP + phosphate + H(+). The protein operates within purine metabolism; IMP biosynthesis via de novo pathway; N(1)-(5-phospho-D-ribosyl)glycinamide from 5-phospho-alpha-D-ribose 1-diphosphate: step 2/2. The polypeptide is Phosphoribosylamine--glycine ligase (Thermotoga maritima (strain ATCC 43589 / DSM 3109 / JCM 10099 / NBRC 100826 / MSB8)).